A 213-amino-acid chain; its full sequence is MSSKHRAVVKDKWKMKKWYEVVAPTSFGGITLGSTPADDPEKLIGRVIETTLYDITGDITQVHVKLYFQIISIDGNKALTRFKGHELARDYMRSLVRRKSSKIQGIFDINTKDGYVLRVTIVALTSYRCNTSQKKAIRRVMREYIFKKASELTLDELVQEIMSYKISNEIAELARKIYPIRRVEVYKTKLLLIPSPEGPKPAVVISPLQAREE.

The protein belongs to the eukaryotic ribosomal protein eS1 family.

The protein is Small ribosomal subunit protein eS1 of Desulfurococcus amylolyticus (strain DSM 18924 / JCM 16383 / VKM B-2413 / 1221n) (Desulfurococcus kamchatkensis).